Consider the following 1837-residue polypeptide: Zinc finger SWIM domain-containing protein 8 (1837 aa).

Phosphoserine is present on residues serine 36, serine 48, and serine 53. The disordered stretch occupies residues 45–65; the sequence is RKQSAGPNSPTGGGGGGGSGG. Positions 55–65 are enriched in gly residues; the sequence is TGGGGGGGSGG. The SWIM-type zinc finger occupies 172–208; it reads YNVAVMFDRCRVTSCSCTCGAGAKWCTHVVALCLFRI. Serine 437 carries the phosphoserine modification. Disordered stretches follow at residues 514 to 727, 803 to 823, and 1016 to 1232; these read SRPG…EEDD, NPPDLKVEPPPAKGKKNKVST, and SQTH…VPNQ. Composition is skewed to basic and acidic residues over residues 523-532 and 566-575; these read GLEESRDRPR and LSAEGGDKAL. Position 567 is a phosphoserine (serine 567). The segment covering 579-602 has biased composition (gly residues); it reads GPGGGKAKALGGAGSGSKGSAGGG. The segment covering 1019-1040 has biased composition (polar residues); the sequence is HKPQTLSSFYSSSRPTTASQRS. Residues 1119–1130 show a composition bias toward gly residues; it reads SRGGYNGRGWGS. Threonine 1139 is modified (phosphothreonine). Residues 1144–1159 show a composition bias toward polar residues; that stretch reads IDSSAPETTSDSSPTL. 3 positions are modified to phosphoserine: serine 1153, serine 1156, and serine 1160. Residues 1174–1209 are compositionally biased toward low complexity; it reads GRGQDSDSISSSSSDSLGSSSSSGSRRASASGGARA. The span at 1210-1226 shows a compositional bias: basic and acidic residues; that stretch reads KTVEVGRYKGRRPESHA. Serine 1267 is subject to Phosphoserine. 2 disordered regions span residues 1442–1464 and 1635–1656; these read SASGIRAGGEAGRGMPEGRGGPG and QPSPLVSGGFPPPEEETHSQPV. The span at 1447 to 1464 shows a compositional bias: gly residues; the sequence is RAGGEAGRGMPEGRGGPG. A Phosphoserine modification is found at serine 1836.

The protein belongs to the ZSWIM8 family. In terms of assembly, component of the SCF-like E3 ubiquitin-protein ligase complex which contains CUL3, RBX1, ELOB, ELOC and ZSWIM8. As to quaternary structure, (Microbial infection) Interacts with Zika virus protein NS5; this interaction allows STAT2 binding and subsequent proteasomal degradation.

The protein localises to the cytoplasm. It localises to the cytosol. The protein operates within protein modification; protein ubiquitination. In terms of biological role, substrate recognition component of a SCF-like E3 ubiquitin-protein ligase complex that promotes target-directed microRNA degradation (TDMD), a process that mediates degradation of microRNAs (miRNAs). The SCF-like E3 ubiquitin-protein ligase complex acts by catalyzing ubiquitination and subsequent degradation of AGO proteins (AGO1, AGO2, AGO3 and/or AGO4), thereby exposing miRNAs for degradation. Specifically recognizes and binds AGO proteins when they are engaged with a TDMD target. May also act as a regulator of axon guidance: specifically recognizes misfolded ROBO3 and promotes its ubiquitination and subsequent degradation. Plays an essential role for proper embryonic development of heart and lung. Controls protein quality of DAB1, a key signal molecule for brain development, thus protecting its signaling strength. Mechanistically, recognizes intrinsically disordered regions of DAB1 and eliminates misfolded DAB1 that cannot be properly phosphorylated. Functionally, (Microbial infection) Participates in Zika virus inhibition of IFN signaling by acting as a scaffold protein to connect ZSWIM8/CUL3 ligase complex and STAT2, leading to STAT2 degradation. The protein is Zinc finger SWIM domain-containing protein 8 of Homo sapiens (Human).